The primary structure comprises 436 residues: Adenosylhomocysteinase (436 aa).

Substrate contacts are provided by T62, D136, and E161. T162–T164 is an NAD(+) binding site. Substrate-binding residues include K191 and D195. NAD(+)-binding positions include N196, G225–G230, E248, N283, I304–H306, and N352.

The protein belongs to the adenosylhomocysteinase family. Requires NAD(+) as cofactor.

It is found in the cytoplasm. The enzyme catalyses S-adenosyl-L-homocysteine + H2O = L-homocysteine + adenosine. It functions in the pathway amino-acid biosynthesis; L-homocysteine biosynthesis; L-homocysteine from S-adenosyl-L-homocysteine: step 1/1. May play a key role in the regulation of the intracellular concentration of adenosylhomocysteine. The protein is Adenosylhomocysteinase of Leptospira borgpetersenii serovar Hardjo-bovis (strain JB197).